The chain runs to 248 residues: tRNA pseudouridine synthase A (248 aa).

Catalysis depends on Asp53, which acts as the Nucleophile. Tyr111 is a substrate binding site.

It belongs to the tRNA pseudouridine synthase TruA family. As to quaternary structure, homodimer.

It carries out the reaction uridine(38/39/40) in tRNA = pseudouridine(38/39/40) in tRNA. Formation of pseudouridine at positions 38, 39 and 40 in the anticodon stem and loop of transfer RNAs. This is tRNA pseudouridine synthase A from Streptococcus thermophilus (strain ATCC BAA-491 / LMD-9).